A 279-amino-acid chain; its full sequence is UTP--glucose-1-phosphate uridylyltransferase (279 aa).

The protein belongs to the UDPGP type 2 family.

It catalyses the reaction alpha-D-glucose 1-phosphate + UTP + H(+) = UDP-alpha-D-glucose + diphosphate. Its function is as follows. May play a role in stationary phase survival. The chain is UTP--glucose-1-phosphate uridylyltransferase (galU) from Pseudomonas aeruginosa (strain ATCC 15692 / DSM 22644 / CIP 104116 / JCM 14847 / LMG 12228 / 1C / PRS 101 / PAO1).